The chain runs to 511 residues: Coatomer subunit delta (511 aa).

Over residues 168–177 (QARRDAERQG) the composition is skewed to basic and acidic residues. Residues 168–188 (QARRDAERQGKKAPGFGGFGS) form a disordered region. Ser223 carries the phosphoserine modification. N6-acetyllysine is present on residues Lys233 and Lys241. Residue Ser244 is modified to Phosphoserine. In terms of domain architecture, MHD spans 271–511 (MESVHMKIEE…TFLVDKYEIL (241 aa)). N6-acetyllysine is present on residues Lys309 and Lys351. Ser493 bears the Phosphoserine mark.

This sequence belongs to the adaptor complexes medium subunit family. Delta-COP subfamily. Oligomeric complex that consists of at least the alpha, beta, beta', gamma, delta, epsilon and zeta subunits.

The protein localises to the cytoplasm. The protein resides in the golgi apparatus membrane. Its subcellular location is the cytoplasmic vesicle. It is found in the COPI-coated vesicle membrane. Its function is as follows. The coatomer is a cytosolic protein complex that binds to dilysine motifs and reversibly associates with Golgi non-clathrin-coated vesicles, which further mediate biosynthetic protein transport from the ER, via the Golgi up to the trans Golgi network. Coatomer complex is required for budding from Golgi membranes, and is essential for the retrograde Golgi-to-ER transport of dilysine-tagged proteins. In mammals, the coatomer can only be recruited by membranes associated to ADP-ribosylation factors (ARFs), which are small GTP-binding proteins; the complex also influences the Golgi structural integrity, as well as the processing, activity, and endocytic recycling of LDL receptors. The chain is Coatomer subunit delta (Arcn1) from Mus musculus (Mouse).